Reading from the N-terminus, the 262-residue chain is Abhydrolase domain-containing protein AFT2-1 (262 aa).

The Peroxisomal targeting signal type 1 motif lies at 260-262; that stretch reads SKL.

The protein belongs to the AB hydrolase superfamily. AKT2 hydrolase family.

It is found in the peroxisome. It participates in mycotoxin biosynthesis. Abhydrolase domain-containing protein; part of the gene clusters that mediate the biosynthesis of the host-selective toxins (HSTs) AF-toxins responsible for Alternaria black spot of strawberry disease by the strawberry pathotype. AF-toxin I and III are valine derivatives of 2,3-dyhydroxy-isovaleric acid and 2-hydroxy-isovaleric acid respectively, while AF II is an isoleucine derivative of 2-hydroxy-valeric acid. These derivatives are bound to a 9,10-epoxy-8-hydroxy-9-methyl-decatrienoic acid (EDA) moiety. On cellular level, AF-toxins affect plasma membrane of susceptible cells and cause a sudden increase in loss of K(+) after a few minutes of toxin treatment. The aldo-keto reductase AFTS1 catalyzes the conversion of 2-keto-isovaleric acid (2-KIV) to 2-hydroxy-isovaleric acid (2-HIV) by reduction of its ketone to an alcohol. The acyl-CoA ligase AFT1, the hydrolase AFT2 and the enoyl-CoA hydratases AFT3 and AFT6, but also the polyketide synthase AFT9, the acyl-CoA dehydrogenase AFT10, the cytochrome P450 monooxygenase AFT11 and the oxidoreductase AFT12 are all involved in the biosynthesis of the AK-, AF- and ACT-toxin common EDA structural moiety. The exact function of each enzyme, and of additional enzymes identified within the AF-toxin clusters have still to be determined. The chain is Abhydrolase domain-containing protein AFT2-1 from Alternaria alternata (Alternaria rot fungus).